Reading from the N-terminus, the 527-residue chain is Beta-glucosidase 19 (527 aa).

An N-terminal signal peptide occupies residues 1-21 (MKIPLLGLLLLISLVGSPTRA). Positions 52 and 155 each coordinate a beta-D-glucoside. A glycan (N-linked (GlcNAc...) asparagine) is linked at Asn183. 200–201 (NE) lines the a beta-D-glucoside pocket. The Proton donor role is filled by Glu201. A disulfide bridge connects residues Cys220 and Cys231. 2 residues coordinate a beta-D-glucoside: Tyr345 and Glu418. Glu418 serves as the catalytic Nucleophile. N-linked (GlcNAc...) asparagine glycosylation occurs at Asn462. Residues Trp469, 476–477 (EW), and Phe485 contribute to the a beta-D-glucoside site. A glycan (N-linked (GlcNAc...) asparagine) is linked at Asn495. A Prevents secretion from ER motif is present at residues 524–527 (HEEL).

Belongs to the glycosyl hydrolase 1 family.

It is found in the endoplasmic reticulum lumen. The catalysed reaction is Hydrolysis of terminal, non-reducing beta-D-glucosyl residues with release of beta-D-glucose.. The polypeptide is Beta-glucosidase 19 (Arabidopsis thaliana (Mouse-ear cress)).